We begin with the raw amino-acid sequence, 645 residues long: ATP-dependent zinc metalloprotease FtsH (645 aa).

The Cytoplasmic segment spans residues 1-6 (MDQRPK). The chain crosses the membrane as a helical span at residues 7–27 (FGMILFYIVLGVFLMVALRGL). Over 28-110 (YTTDTNLSVP…VVYEKGNDSL (83 aa)) the chain is Periplasmic. Residues 111-131 (FWVNLLGTIIPLAIIVFIWFF) traverse the membrane as a helical segment. At 132 to 645 (AMRSLSGRNS…AKEGNEDEKN (514 aa)) the chain is on the cytoplasmic side. 204-211 (GPPGTGKT) is a binding site for ATP. His-426 is a Zn(2+) binding site. Glu-427 is an active-site residue. The Zn(2+) site is built by His-430 and Asp-503. The interval 623 to 645 (SKRKVSAVSTNEEAKEGNEDEKN) is disordered. Basic and acidic residues predominate over residues 634–645 (EEAKEGNEDEKN).

In the central section; belongs to the AAA ATPase family. This sequence in the C-terminal section; belongs to the peptidase M41 family. In terms of assembly, homohexamer. Requires Zn(2+) as cofactor.

It is found in the cell inner membrane. Its function is as follows. Acts as a processive, ATP-dependent zinc metallopeptidase for both cytoplasmic and membrane proteins. Plays a role in the quality control of integral membrane proteins. The protein is ATP-dependent zinc metalloprotease FtsH of Kosmotoga olearia (strain ATCC BAA-1733 / DSM 21960 / TBF 19.5.1).